The primary structure comprises 156 residues: MARKCGAVKLRSCCDPLFEAPEVGRLVNLVMVSGKKTVAARIVYTALAMLSPDRRRSYELLMQALHNIKPSAEIRTRRMGGASYRVPAEICSKRRMSLALRWLKSAAMRRRERYAHVRLYNEILDALSRRGGAVRQRDEVHRLAHANRAFSHSRRG.

It belongs to the universal ribosomal protein uS7 family. In terms of assembly, part of the 30S ribosomal subunit. Contacts proteins S9 and S11.

In terms of biological role, one of the primary rRNA binding proteins, it binds directly to 16S rRNA where it nucleates assembly of the head domain of the 30S subunit. Is located at the subunit interface close to the decoding center, probably blocks exit of the E-site tRNA. The protein is Small ribosomal subunit protein uS7 of Tremblaya princeps.